The chain runs to 302 residues: Paired immunoglobulin-like type 2 receptor alpha (302 aa).

A signal peptide spans 1–31; it reads MALLISLPGGTPAMAQILLLLSSACLHAGNS. At 32-198 the chain is on the extracellular side; that stretch reads ERSNRKNGFG…GGLDLQTTVG (167 aa). Asparagine 90 and asparagine 107 each carry an N-linked (GlcNAc...) asparagine glycan. A helical membrane pass occupies residues 199-219; it reads LATAAAVFLVGVLGLIVFLWW. At 220–302 the chain is on the cytoplasmic side; sequence KRRRQGQKTK…ETVYSIVKAK (83 aa). The span at 228-248 shows a compositional bias: basic and acidic residues; that stretch reads TKAEIPAREPLETSEKHESVG. Residues 228-293 form a disordered region; it reads TKAEIPAREP…LPVHGNPQEE (66 aa). 2 short sequence motifs (ITIM motif) span residues 265-270 and 294-299; these read IVYASI and TVYSIV. Polar residues predominate over residues 270–280; sequence ISLSSPTSPGT.

Interacts with CD99. Phosphorylated on tyrosine residues.

Its subcellular location is the membrane. In terms of biological role, paired receptors consist of highly related activating and inhibitory receptors and are widely involved in the regulation of the immune system. Receptor for CD99 and PIANP. This is Paired immunoglobulin-like type 2 receptor alpha (Pilra) from Mus musculus (Mouse).